The following is an 83-amino-acid chain: Hainantoxin-III (83 aa).

Residues Met1 to Ala21 form the signal peptide. Positions Ser22–Arg48 are excised as a propeptide. 3 cysteine pairs are disulfide-bonded: Cys50-Cys65, Cys57-Cys70, and Cys64-Cys77. Leu81 is modified (leucine amide).

This sequence belongs to the neurotoxin 10 (Hwtx-1) family. 15 (Hntx-3) subfamily. In terms of assembly, monomer. Expressed by the venom gland.

The protein resides in the secreted. Functionally, selective antagonist of neuronal tetrodotoxin (TTX)-sensitive voltage-gated sodium channels (IC(50)=1270 nM on Nav1.1/SCN1A, 270 nM on Nav1.2/SCN2A, 491 nM on Nav1.3/SCN3A and 232 nM on Nav1.7/SCN9A). This toxin suppress Nav1.7 current amplitude without significantly altering the activation, inactivation, and repriming kinetics. Short extreme depolarizations partially activate the toxin-bound channel, indicating voltage-dependent inhibition of this toxin. This toxin increases the deactivation of the Nav1.7 current after extreme depolarizations. The toxin-Nav1.7 complex is gradually dissociated upon prolonged strong depolarizations in a voltage-dependent manner, and the unbound toxin rebinds to Nav1.7 after a long repolarization. Moreover, analysis of chimeric channels showed that the DIIS3-S4 linker is critical for toxin binding to Nav1.7. These data are consistent with this toxin interacting with Nav1.7 site 4 and trapping the domain II voltage sensor in the closed state. This is Hainantoxin-III from Cyriopagopus hainanus (Chinese bird spider).